The sequence spans 95 residues: Aspartyl/glutamyl-tRNA(Asn/Gln) amidotransferase subunit C (95 aa).

Belongs to the GatC family. In terms of assembly, heterotrimer of A, B and C subunits.

The catalysed reaction is L-glutamyl-tRNA(Gln) + L-glutamine + ATP + H2O = L-glutaminyl-tRNA(Gln) + L-glutamate + ADP + phosphate + H(+). The enzyme catalyses L-aspartyl-tRNA(Asn) + L-glutamine + ATP + H2O = L-asparaginyl-tRNA(Asn) + L-glutamate + ADP + phosphate + 2 H(+). Its function is as follows. Allows the formation of correctly charged Asn-tRNA(Asn) or Gln-tRNA(Gln) through the transamidation of misacylated Asp-tRNA(Asn) or Glu-tRNA(Gln) in organisms which lack either or both of asparaginyl-tRNA or glutaminyl-tRNA synthetases. The reaction takes place in the presence of glutamine and ATP through an activated phospho-Asp-tRNA(Asn) or phospho-Glu-tRNA(Gln). This Acetivibrio thermocellus (strain ATCC 27405 / DSM 1237 / JCM 9322 / NBRC 103400 / NCIMB 10682 / NRRL B-4536 / VPI 7372) (Clostridium thermocellum) protein is Aspartyl/glutamyl-tRNA(Asn/Gln) amidotransferase subunit C.